Here is a 133-residue protein sequence, read N- to C-terminus: Small ribosomal subunit protein uS19 (133 aa).

Belongs to the universal ribosomal protein uS19 family. In terms of assembly, part of the 30S ribosomal subunit.

In terms of biological role, protein S19 forms a complex with S13 that binds strongly to the 16S ribosomal RNA. In Thermococcus kodakarensis (strain ATCC BAA-918 / JCM 12380 / KOD1) (Pyrococcus kodakaraensis (strain KOD1)), this protein is Small ribosomal subunit protein uS19.